The chain runs to 416 residues: Serine/threonine transporter SstT (416 aa).

9 helical membrane-spanning segments follow: residues Ser-15–Pro-35, Val-49–Ile-69, Ile-82–Phe-102, Ala-141–Met-161, Leu-192–Gly-212, Leu-217–Phe-237, Val-288–Leu-308, Leu-316–Ala-336, and Ile-363–Thr-383.

The protein belongs to the dicarboxylate/amino acid:cation symporter (DAACS) (TC 2.A.23) family.

Its subcellular location is the cell inner membrane. It carries out the reaction L-serine(in) + Na(+)(in) = L-serine(out) + Na(+)(out). The catalysed reaction is L-threonine(in) + Na(+)(in) = L-threonine(out) + Na(+)(out). Its function is as follows. Involved in the import of serine and threonine into the cell, with the concomitant import of sodium (symport system). This is Serine/threonine transporter SstT from Aeromonas hydrophila subsp. hydrophila (strain ATCC 7966 / DSM 30187 / BCRC 13018 / CCUG 14551 / JCM 1027 / KCTC 2358 / NCIMB 9240 / NCTC 8049).